We begin with the raw amino-acid sequence, 179 residues long: Putative BPIFA4P protein (179 aa).

A signal peptide spans 1–20; sequence MLNVSGLFVLLCGLLVSSSA.

Belongs to the BPI/LBP/Plunc superfamily. Plunc family. As to expression, expressed in breast cancer and salivary gland.

The protein localises to the secreted. Its function is as follows. Major protein in sweat, has surfactant properties. The sequence is that of Putative BPIFA4P protein (BPIFA4P) from Homo sapiens (Human).